A 111-amino-acid chain; its full sequence is Cell cycle protein GpsB (111 aa).

Positions 38–72 (IKDYEAFHKEFEQLKQQNARLKRELEEQKLAATQV) form a coiled coil.

This sequence belongs to the GpsB family. In terms of assembly, forms polymers through the coiled coil domains. Interacts with PBP1, MreC and EzrA.

Its subcellular location is the cytoplasm. Functionally, divisome component that associates with the complex late in its assembly, after the Z-ring is formed, and is dependent on DivIC and PBP2B for its recruitment to the divisome. Together with EzrA, is a key component of the system that regulates PBP1 localization during cell cycle progression. Its main role could be the removal of PBP1 from the cell pole after pole maturation is completed. Also contributes to the recruitment of PBP1 to the division complex. Not essential for septum formation. The polypeptide is Cell cycle protein GpsB (Bacillus cereus (strain ATCC 10987 / NRS 248)).